Here is a 108-residue protein sequence, read N- to C-terminus: UPF0060 membrane protein YnfA (108 aa).

Over 1–5 (MLKTT) the chain is Periplasmic. Residues 6-26 (LLFFVTALCEIIGCFLPWLWI) traverse the membrane as a helical segment. At 27–30 (KRGA) the chain is on the cytoplasmic side. The chain crosses the membrane as a helical span at residues 31-51 (SVWWLLPAAASLALFVWLLTL). Over 52 to 60 (HPAASGRVY) the chain is Periplasmic. Residues 61–81 (AAYGGVYVCTALLWLRVVDGV) form a helical membrane-spanning segment. Residues 82–84 (RLT) lie on the Cytoplasmic side of the membrane. Residues 85–105 (VYDWSGALIALCGMLIIVVGW) form a helical membrane-spanning segment. The Periplasmic segment spans residues 106 to 108 (GRT).

Belongs to the UPF0060 family.

The protein localises to the cell inner membrane. The polypeptide is UPF0060 membrane protein YnfA (Salmonella typhi).